Reading from the N-terminus, the 134-residue chain is Large ribosomal subunit protein bL20 (134 aa).

The protein belongs to the bacterial ribosomal protein bL20 family.

Functionally, binds directly to 23S ribosomal RNA and is necessary for the in vitro assembly process of the 50S ribosomal subunit. It is not involved in the protein synthesizing functions of that subunit. The protein is Large ribosomal subunit protein bL20 of Allorhizobium ampelinum (strain ATCC BAA-846 / DSM 112012 / S4) (Agrobacterium vitis (strain S4)).